A 430-amino-acid chain; its full sequence is Tyrosine--tRNA ligase (430 aa).

Residue Y32 coordinates L-tyrosine. A 'HIGH' region motif is present at residues 37 to 46 (PTADSLHIGH). The L-tyrosine site is built by Y172 and Q176. A 'KMSKS' region motif is present at residues 232–236 (KFGKT). Residue K235 coordinates ATP. The S4 RNA-binding domain occupies 362–429 (VKAVDLFVDN…GKKNYYLIIA (68 aa)).

Belongs to the class-I aminoacyl-tRNA synthetase family. TyrS type 1 subfamily. Homodimer.

Its subcellular location is the cytoplasm. It carries out the reaction tRNA(Tyr) + L-tyrosine + ATP = L-tyrosyl-tRNA(Tyr) + AMP + diphosphate + H(+). Catalyzes the attachment of tyrosine to tRNA(Tyr) in a two-step reaction: tyrosine is first activated by ATP to form Tyr-AMP and then transferred to the acceptor end of tRNA(Tyr). In Bacteroides fragilis (strain YCH46), this protein is Tyrosine--tRNA ligase.